We begin with the raw amino-acid sequence, 103 residues long: Large ribosomal subunit protein bL21 (103 aa).

Belongs to the bacterial ribosomal protein bL21 family. In terms of assembly, part of the 50S ribosomal subunit. Contacts protein L20.

Its function is as follows. This protein binds to 23S rRNA in the presence of protein L20. This is Large ribosomal subunit protein bL21 from Polaromonas sp. (strain JS666 / ATCC BAA-500).